Here is a 242-residue protein sequence, read N- to C-terminus: Probable 2-phosphosulfolactate phosphatase (242 aa).

Belongs to the ComB family. Mg(2+) serves as cofactor.

It carries out the reaction (2R)-O-phospho-3-sulfolactate + H2O = (2R)-3-sulfolactate + phosphate. This chain is Probable 2-phosphosulfolactate phosphatase, found in Synechococcus sp. (strain JA-2-3B'a(2-13)) (Cyanobacteria bacterium Yellowstone B-Prime).